We begin with the raw amino-acid sequence, 625 residues long: 1-deoxy-D-xylulose-5-phosphate synthase (625 aa).

Thiamine diphosphate-binding positions include His80 and 121 to 123; that span reads GHS. Asp152 provides a ligand contact to Mg(2+). Residues 153–154, Asn181, Tyr288, and Glu370 each bind thiamine diphosphate; that span reads GA. Residue Asn181 coordinates Mg(2+).

The protein belongs to the transketolase family. DXPS subfamily. In terms of assembly, homodimer. Mg(2+) is required as a cofactor. It depends on thiamine diphosphate as a cofactor.

The enzyme catalyses D-glyceraldehyde 3-phosphate + pyruvate + H(+) = 1-deoxy-D-xylulose 5-phosphate + CO2. It functions in the pathway metabolic intermediate biosynthesis; 1-deoxy-D-xylulose 5-phosphate biosynthesis; 1-deoxy-D-xylulose 5-phosphate from D-glyceraldehyde 3-phosphate and pyruvate: step 1/1. In terms of biological role, catalyzes the acyloin condensation reaction between C atoms 2 and 3 of pyruvate and glyceraldehyde 3-phosphate to yield 1-deoxy-D-xylulose-5-phosphate (DXP). This is 1-deoxy-D-xylulose-5-phosphate synthase from Alteromonas mediterranea (strain DSM 17117 / CIP 110805 / LMG 28347 / Deep ecotype).